A 455-amino-acid chain; its full sequence is Ribulose bisphosphate carboxylase large chain (455 aa).

Position 5 is an N6,N6,N6-trimethyllysine (lysine 5). 2 residues coordinate substrate: asparagine 114 and threonine 164. Residue lysine 166 is the Proton acceptor of the active site. Lysine 168 serves as a coordination point for substrate. Positions 192, 194, and 195 each coordinate Mg(2+). At lysine 192 the chain carries N6-carboxylysine. Residue histidine 285 is the Proton acceptor of the active site. Residues arginine 286, histidine 318, and serine 370 each coordinate substrate.

It belongs to the RuBisCO large chain family. Type I subfamily. Heterohexadecamer of 8 large chains and 8 small chains; disulfide-linked. The disulfide link is formed within the large subunit homodimers. Requires Mg(2+) as cofactor. The disulfide bond which can form in the large chain dimeric partners within the hexadecamer appears to be associated with oxidative stress and protein turnover.

It localises to the plastid. The protein resides in the chloroplast. The enzyme catalyses 2 (2R)-3-phosphoglycerate + 2 H(+) = D-ribulose 1,5-bisphosphate + CO2 + H2O. The catalysed reaction is D-ribulose 1,5-bisphosphate + O2 = 2-phosphoglycolate + (2R)-3-phosphoglycerate + 2 H(+). In terms of biological role, ruBisCO catalyzes two reactions: the carboxylation of D-ribulose 1,5-bisphosphate, the primary event in carbon dioxide fixation, as well as the oxidative fragmentation of the pentose substrate in the photorespiration process. Both reactions occur simultaneously and in competition at the same active site. This is Ribulose bisphosphate carboxylase large chain from Lupinus luteus (European yellow lupine).